A 519-amino-acid polypeptide reads, in one-letter code: Serine/threonine-protein kinase RIO3 (519 aa).

2 positions are modified to phosphoserine: serine 8 and serine 112. A Phosphotyrosine modification is found at tyrosine 122. The interval 122–159 is disordered; the sequence is YEDSDSSEDEVDWQDTRDDPYRPAKPIPTPKKGFIGKG. Residues 124-134 are compositionally biased toward acidic residues; that stretch reads DSDSSEDEVDW. 3 positions are modified to phosphoserine: serine 125, serine 127, and serine 128. One can recognise a Protein kinase domain in the interval 251-519; sequence ETITGCISTG…DGGPPILYDE (269 aa). Residues 257-265 and lysine 290 each bind ATP; that span reads ISTGKESVV. Aspartate 406 (proton acceptor) is an active-site residue.

This sequence belongs to the protein kinase superfamily. RIO-type Ser/Thr kinase family. Interacts with CASP10. Interacts with IRF3; RIOK3 probably mediates the interaction of TBK1 with IRF3. Associated with 40S pre-ribosomal particles. It depends on Mg(2+) as a cofactor. Post-translationally, autophosphorylated (in vitro).

The protein resides in the cytoplasm. The catalysed reaction is L-seryl-[protein] + ATP = O-phospho-L-seryl-[protein] + ADP + H(+). The enzyme catalyses L-threonyl-[protein] + ATP = O-phospho-L-threonyl-[protein] + ADP + H(+). Its function is as follows. Involved in regulation of type I interferon (IFN)-dependent immune response which plays a critical role in the innate immune response against DNA and RNA viruses. May act as an adapter protein essential for the recruitment of TBK1 to IRF3. Phosphorylates IFIH1 within the C-terminal region interfering with IFIH1 filament assembly on long dsRNA and resulting in attenuated IFIH1-signaling. Can inhibit CASP10 isoform 7-mediated activation of the NF-kappaB signaling pathway. May play a role in the biogenesis of the 40S ribosomal subunit. Involved in the processing of 21S pre-rRNA to the mature 18S rRNA. This chain is Serine/threonine-protein kinase RIO3 (RIOK3), found in Bos taurus (Bovine).